The chain runs to 512 residues: Alpha-amylase (512 aa).

The first 29 residues, 1 to 29 (MKQQKRLYARLLTLLFALIFLLPHSAAAA), serve as a signal peptide directing secretion. 8 residues coordinate Ca(2+): Asn133, Asp190, Ala210, Asp212, Asp223, Asp229, Asp231, and Asp233. Asp190 is a binding site for Na(+). Na(+)-binding residues include Asp212, Asp223, and Asp229. Residue Asp260 is the Nucleophile of the active site. A Ca(2+)-binding site is contributed by His264. Glu290 acts as the Proton donor in catalysis. Ca(2+)-binding residues include Gly329, Tyr331, His435, Asp436, and Asp459.

It belongs to the glycosyl hydrolase 13 family. As to quaternary structure, monomer. The cofactor is Ca(2+). Na(+) is required as a cofactor.

The protein resides in the secreted. It catalyses the reaction Endohydrolysis of (1-&gt;4)-alpha-D-glucosidic linkages in polysaccharides containing three or more (1-&gt;4)-alpha-linked D-glucose units.. This Bacillus licheniformis protein is Alpha-amylase (amyS).